A 297-amino-acid polypeptide reads, in one-letter code: Iron-sulfur cluster assembly SufBD family protein ycf24 (297 aa).

The protein belongs to the iron-sulfur cluster assembly SufBD family.

It is found in the plastid. The protein resides in the chloroplast. The sequence is that of Iron-sulfur cluster assembly SufBD family protein ycf24 (ycf24) from Antithamnion sp. (Red alga).